The sequence spans 537 residues: MQETGVHNGAYGTDKFGLKNLKGVYWNFGAPQLYEHALKNGEAVLSSDGALVADTGVFTGRSPKDKFTVRDATTENTMWWGGNQSITAEQFEALYQDFLKHAEGMTLFAQDLYGGADPTFRIKTRVYTELAWHSLFIRTLLRRPERAELENFVPELTLIDLPSFRADPKRHGCRSENVVAIDFARKIVLIGGTQYAGEMKKSVFTTLNYYLPEKGVLPMHCSANVGPNGDTAIFFGLSGTGKTTLSADPNRTLIGDDEHGWGKDGVFNFEGGCYAKCIKLSSENEPEIYAASTRFGAVLENVVLGELDRKPDFDDGSKTENTRSAYPLESIPNASLTGRAGQPKNVVMLAADAFGVMPPIAKLTPAQAMYHFLSGYTAKVAGTERGVTEPTPEFSTCFGSPFLPRDPSVYGNMLRELIAKHNVDCWLVNTGWTGGIYGTGHRMPIKVTRALLTAALDGSLRNVEFRTDPYFGFAVPTALPGVPSEILDPVKTWADKAAFDTTARKLVGMFQKNFAKFEAQVDAEVRAAAPDVKMAVE.

Residues R61, Y195, and K201 each contribute to the substrate site. ATP contacts are provided by residues K201, H220, and 236 to 244; that span reads GLSGTGKTT. 2 residues coordinate Mn(2+): K201 and H220. D257 serves as a coordination point for Mn(2+). Residues E285, R323, and T448 each coordinate ATP. R323 is a substrate binding site.

This sequence belongs to the phosphoenolpyruvate carboxykinase (ATP) family. The cofactor is Mn(2+).

The protein resides in the cytoplasm. It catalyses the reaction oxaloacetate + ATP = phosphoenolpyruvate + ADP + CO2. It functions in the pathway carbohydrate biosynthesis; gluconeogenesis. Functionally, involved in the gluconeogenesis. Catalyzes the conversion of oxaloacetate (OAA) to phosphoenolpyruvate (PEP) through direct phosphoryl transfer between the nucleoside triphosphate and OAA. The polypeptide is Phosphoenolpyruvate carboxykinase (ATP) (Rhodopseudomonas palustris (strain ATCC BAA-98 / CGA009)).